Reading from the N-terminus, the 377-residue chain is Killer cell immunoglobulin-like receptor 2DL4 (377 aa).

The N-terminal stretch at 1 to 21 (MSMSPTVIILACLGFFLDQSV) is a signal peptide. Residues 22-242 (WAHVGGQDKP…FKTGIARHLH (221 aa)) lie on the Extracellular side of the membrane. 2 consecutive Ig-like C2-type domains span residues 44-104 (GGHV…HPHS) and 139-202 (GENV…FHGS). A disulfide bridge links cysteine 51 with cysteine 97. Residues asparagine 141 and asparagine 175 are each glycosylated (N-linked (GlcNAc...) asparagine). Residues cysteine 146 and cysteine 195 are joined by a disulfide bond. A helical membrane pass occupies residues 243–263 (AVIRYSVAIILFTILPFFLLH). At 264 to 377 (RWCSKKKDAA…ASSNVPAAGI (114 aa)) the chain is on the cytoplasmic side. The disordered stretch occupies residues 338–377 (PRALSPAHEHHSQALMGSSRETTALSQTQLASSNVPAAGI). Over residues 352–377 (LMGSSRETTALSQTQLASSNVPAAGI) the composition is skewed to polar residues.

Belongs to the immunoglobulin superfamily. As to quaternary structure, interacts with peptide-bound HLA-G-B2M heterotrimeric complex. Interacts with ARRB2. Expressed in decidual NK cells and innate lymphoid cell type I (ILC1). Expressed in a subset of peripheral NK cells.

Its subcellular location is the cell membrane. It localises to the early endosome membrane. Receptor for non-classical major histocompatibility class Ib HLA-G molecules. Recognizes HLA-G in complex with B2M/beta-2 microglobulin and a nonamer self-peptide (peptide-bound HLA-G-B2M). In decidual NK cells, binds peptide-bound HLA-G-B2M complex and triggers NK cell senescence-associated secretory phenotype as a molecular switch to promote vascular remodeling and fetal growth in early pregnancy. May play a role in balancing tolerance and antiviral-immunity at maternal-fetal interface by keeping in check the effector functions of NK, CD8+ T cells and B cells. Upon interaction with peptide-bound HLA-G-B2M, initiates signaling from the endosomal compartment leading to downstream activation of PRKDC-XRCC5 and AKT1, and ultimately triggering NF-kappa-B-dependent pro-inflammatory response. This is Killer cell immunoglobulin-like receptor 2DL4 from Homo sapiens (Human).